A 91-amino-acid polypeptide reads, in one-letter code: Small ribosomal subunit protein uS19 (91 aa).

Belongs to the universal ribosomal protein uS19 family.

Functionally, protein S19 forms a complex with S13 that binds strongly to the 16S ribosomal RNA. In Pseudomonas fluorescens (strain Pf0-1), this protein is Small ribosomal subunit protein uS19.